The following is a 673-amino-acid chain: UvrABC system protein B (673 aa).

The region spanning 26 to 414 (ANFEAGLAKQ…AGEVTELVVR (389 aa)) is the Helicase ATP-binding domain. 39–46 (GVTGSGKT) contacts ATP. The Beta-hairpin signature appears at 92–115 (YYDYYQPEAYVPSSDTFIEKDSSI). A Helicase C-terminal domain is found at 431–597 (QVDDLMSEVH…SVERPIADIM (167 aa)). 2 stretches are compositionally biased toward basic and acidic residues: residues 600–609 (ARDDAAEKKS) and 618–628 (HVAEETPDYRA). The tract at residues 600–628 (ARDDAAEKKSGKGRSKSRHVAEETPDYRA) is disordered. One can recognise a UVR domain in the interval 635 to 670 (AGKLKSLEQKMYQHAKDLEFEAAAQIRDQIQKLKAA).

It belongs to the UvrB family. In terms of assembly, forms a heterotetramer with UvrA during the search for lesions. Interacts with UvrC in an incision complex.

The protein resides in the cytoplasm. In terms of biological role, the UvrABC repair system catalyzes the recognition and processing of DNA lesions. A damage recognition complex composed of 2 UvrA and 2 UvrB subunits scans DNA for abnormalities. Upon binding of the UvrA(2)B(2) complex to a putative damaged site, the DNA wraps around one UvrB monomer. DNA wrap is dependent on ATP binding by UvrB and probably causes local melting of the DNA helix, facilitating insertion of UvrB beta-hairpin between the DNA strands. Then UvrB probes one DNA strand for the presence of a lesion. If a lesion is found the UvrA subunits dissociate and the UvrB-DNA preincision complex is formed. This complex is subsequently bound by UvrC and the second UvrB is released. If no lesion is found, the DNA wraps around the other UvrB subunit that will check the other stand for damage. In Xanthomonas axonopodis pv. citri (strain 306), this protein is UvrABC system protein B.